A 403-amino-acid polypeptide reads, in one-letter code: S-adenosylmethionine synthase (403 aa).

Position 16 (His-16) interacts with ATP. Asp-18 is a binding site for Mg(2+). Residue Glu-44 participates in K(+) binding. Positions 57 and 100 each coordinate L-methionine. Residues 100-110 (QSPDIAQGVDR) are flexible loop. The segment at 106-126 (QGVDRSYESRSGSASTDAHDL) is disordered. ATP is bound by residues 176 to 178 (DGK), 248 to 249 (KF), Asp-257, 263 to 264 (RK), Ala-280, and Lys-284. An L-methionine-binding site is contributed by Asp-257. L-methionine is bound at residue Lys-288.

Belongs to the AdoMet synthase family. As to quaternary structure, homotetramer; dimer of dimers. Mg(2+) is required as a cofactor. K(+) serves as cofactor.

The protein localises to the cytoplasm. The enzyme catalyses L-methionine + ATP + H2O = S-adenosyl-L-methionine + phosphate + diphosphate. The protein operates within amino-acid biosynthesis; S-adenosyl-L-methionine biosynthesis; S-adenosyl-L-methionine from L-methionine: step 1/1. Its function is as follows. Catalyzes the formation of S-adenosylmethionine (AdoMet) from methionine and ATP. The overall synthetic reaction is composed of two sequential steps, AdoMet formation and the subsequent tripolyphosphate hydrolysis which occurs prior to release of AdoMet from the enzyme. This is S-adenosylmethionine synthase from Clavibacter michiganensis subsp. michiganensis (strain NCPPB 382).